Reading from the N-terminus, the 507-residue chain is Rhamnogalacturonase A (507 aa).

A signal peptide spans 1-21; it reads MYVSRLLLFLAPLLVKGQLSG. C38 and C64 form a disulfide bridge. D215 acts as the Proton donor in catalysis. An intrachain disulfide couples C217 to C234. N-linked (GlcNAc...) asparagine glycosylation is present at N235. H290 is an active-site residue. N-linked (GlcNAc...) asparagine glycosylation is present at N317. 2 disulfides stabilise this stretch: C340/C346 and C368/C377. A compositionally biased stretch (low complexity) spans 462 to 491; that stretch reads SPATSSPTATSTAISSVDPVSAATTTATSH. The tract at residues 462 to 507 is disordered; the sequence is SPATSSPTATSTAISSVDPVSAATTTATSHGHGKSHHKHQCRAHRH. Basic residues predominate over residues 492 to 507; that stretch reads GHGKSHHKHQCRAHRH.

It belongs to the glycosyl hydrolase 28 family.

The protein resides in the secreted. The enzyme catalyses Endohydrolysis of alpha-D-GalA-(1-&gt;2)-alpha-L-Rha glycosidic bond in the rhamnogalacturonan I backbone with initial inversion of anomeric configuration releasing oligosaccharides with beta-D-GalA at the reducing end.. Its function is as follows. Pectinolytic enzymes consist of four classes of enzymes: pectine lyase, polygalacturonase, pectin methylesterase and rhamnogalacturonase. Hydrolyzes alpha-D-galacturonopyranosyl-(1,2)-alpha-L-rhamnopyranosyl linkages in the backbone of the hairy regions of pectins. Active against linseed rhamnogalacturonan. In Emericella nidulans (strain FGSC A4 / ATCC 38163 / CBS 112.46 / NRRL 194 / M139) (Aspergillus nidulans), this protein is Rhamnogalacturonase A (rhgA).